A 156-amino-acid polypeptide reads, in one-letter code: ATP synthase subunit b (156 aa).

The helical transmembrane segment at 7–27 (LIGQLIAFAIFVAFCMKFVWP) threads the bilayer.

This sequence belongs to the ATPase B chain family. In terms of assembly, F-type ATPases have 2 components, F(1) - the catalytic core - and F(0) - the membrane proton channel. F(1) has five subunits: alpha(3), beta(3), gamma(1), delta(1), epsilon(1). F(0) has three main subunits: a(1), b(2) and c(10-14). The alpha and beta chains form an alternating ring which encloses part of the gamma chain. F(1) is attached to F(0) by a central stalk formed by the gamma and epsilon chains, while a peripheral stalk is formed by the delta and b chains.

It localises to the cell inner membrane. In terms of biological role, f(1)F(0) ATP synthase produces ATP from ADP in the presence of a proton or sodium gradient. F-type ATPases consist of two structural domains, F(1) containing the extramembraneous catalytic core and F(0) containing the membrane proton channel, linked together by a central stalk and a peripheral stalk. During catalysis, ATP synthesis in the catalytic domain of F(1) is coupled via a rotary mechanism of the central stalk subunits to proton translocation. Functionally, component of the F(0) channel, it forms part of the peripheral stalk, linking F(1) to F(0). This chain is ATP synthase subunit b, found in Pasteurella multocida (strain Pm70).